Consider the following 699-residue polypeptide: MSDADVDAESNPYLRDPPTEFEPAESLSREAAEGQAALLREAVREHDHRYYVAADPLVSDAAYDALFSRLVALEDAFDLDTTNSPTNRVGGEPIDALETVEHVAPMLSIDQSTDADDLREFDERVRREVGAVDYVCEPKFDGLSVEVVYEDGEFVRAATRGDGRRGDDVSAQVKTIPTVPLSLRGDHPDRLAVRGEIYMPKSDFSDLNARRVEAGEDAFANPRNAAAGTLRNLDPSVVADRPLAVFFYDILDASARPDSQWAALDRLREWGLRVTDRIERAEDVAEAIDYRDRMQAARDDLDYEIDGTVIKVDSRDARERLGEKSRSVRWAFAYKFPARHEVTTVRDIVVQVGRTGRLTPVAILDPVDVGGVTVSRATLHNPDERAALGVAVGDRVRVKRAGDVIPQVVEVTEDGGGCYEFPDECPVCGSAVDRDGPLAFCSGGLSCPAQREASIGHFAVKGAMDIDGLGEERVAQLVDAGLVETVADLYDLTADDLAELEGWGETSAENLVAAVENAKHPSLDSFLVGLSIPEVGEATARGLAREFGSIEAFPIEADAEEDEFDAFEERLTTVPDVGETVARRVRDFFENADNRAVIRALLDRGVDPEPVESGGDELDGLTFVVTGTLAASRSDVTELVESHGGNVTGSVSGNTDYLVVGENPGRSKRDDAEANDVPTLAETEFEALLAERGVAYPPE.

The tract at residues 1–29 (MSDADVDAESNPYLRDPPTEFEPAESLSR) is disordered. NAD(+)-binding positions include 60–64 (DAAYD), 108–109 (SI), and E137. Residue K139 is the N6-AMP-lysine intermediate of the active site. Positions 160, 196, 311, and 335 each coordinate NAD(+). Positions 425, 428, 441, and 447 each coordinate Zn(2+). One can recognise a BRCT domain in the interval 613–666 (SGGDELDGLTFVVTGTLAASRSDVTELVESHGGNVTGSVSGNTDYLVVGENPGR).

This sequence belongs to the NAD-dependent DNA ligase family. LigA subfamily. It depends on Mg(2+) as a cofactor. Requires Mn(2+) as cofactor.

The enzyme catalyses NAD(+) + (deoxyribonucleotide)n-3'-hydroxyl + 5'-phospho-(deoxyribonucleotide)m = (deoxyribonucleotide)n+m + AMP + beta-nicotinamide D-nucleotide.. Displays maximal in vitro activity at high salt levels. Its function is as follows. DNA ligase that catalyzes the formation of phosphodiester linkages between 5'-phosphoryl and 3'-hydroxyl groups in double-stranded DNA using NAD as a coenzyme and as the energy source for the reaction. It is essential for DNA replication and repair of damaged DNA. This chain is DNA ligase, found in Haloferax volcanii (strain ATCC 29605 / DSM 3757 / JCM 8879 / NBRC 14742 / NCIMB 2012 / VKM B-1768 / DS2) (Halobacterium volcanii).